The primary structure comprises 51 residues: Magnetosome protein Mms5 (51 aa).

The Lumenal segment spans residues 1–8 (MLSAKGVS). The segment at 9–16 (LGLGLGLG) is LG region. A helical membrane pass occupies residues 9–29 (LGLGLGLGAWGPVLLGVVGVA). The Cytoplasmic portion of the chain corresponds to 30–51 (GALALYGYYKNRNAEPAAAEAV).

The protein belongs to the magnetosome MamD/Mms5 family. Post-translationally, may undergo N-terminal cleavage.

It is found in the magnetosome membrane. Its function is as follows. Might be involved in magnetite crystal growth. The sequence is that of Magnetosome protein Mms5 from Magnetospirillum gryphiswaldense (strain DSM 6361 / JCM 21280 / NBRC 15271 / MSR-1).